We begin with the raw amino-acid sequence, 183 residues long: ATP synthase subunit delta (183 aa).

Belongs to the ATPase delta chain family. In terms of assembly, F-type ATPases have 2 components, F(1) - the catalytic core - and F(0) - the membrane proton channel. F(1) has five subunits: alpha(3), beta(3), gamma(1), delta(1), epsilon(1). F(0) has three main subunits: a(1), b(2) and c(10-14). The alpha and beta chains form an alternating ring which encloses part of the gamma chain. F(1) is attached to F(0) by a central stalk formed by the gamma and epsilon chains, while a peripheral stalk is formed by the delta and b chains.

It localises to the cell inner membrane. Functionally, f(1)F(0) ATP synthase produces ATP from ADP in the presence of a proton or sodium gradient. F-type ATPases consist of two structural domains, F(1) containing the extramembraneous catalytic core and F(0) containing the membrane proton channel, linked together by a central stalk and a peripheral stalk. During catalysis, ATP synthesis in the catalytic domain of F(1) is coupled via a rotary mechanism of the central stalk subunits to proton translocation. Its function is as follows. This protein is part of the stalk that links CF(0) to CF(1). It either transmits conformational changes from CF(0) to CF(1) or is implicated in proton conduction. The sequence is that of ATP synthase subunit delta from Ehrlichia canis (strain Jake).